The sequence spans 480 residues: Cysteine--tRNA ligase (480 aa).

Cysteine 29 is a binding site for Zn(2+). The 'HIGH' region motif lies at 31-41 (PTVYGHAHLGH). Positions 221, 246, and 250 each coordinate Zn(2+). The 'KMSKS' region signature appears at 278–282 (KMGKS). Position 281 (lysine 281) interacts with ATP.

It belongs to the class-I aminoacyl-tRNA synthetase family. Monomer. Zn(2+) is required as a cofactor.

It localises to the cytoplasm. The catalysed reaction is tRNA(Cys) + L-cysteine + ATP = L-cysteinyl-tRNA(Cys) + AMP + diphosphate. The polypeptide is Cysteine--tRNA ligase (Chlorobium chlorochromatii (strain CaD3)).